A 246-amino-acid polypeptide reads, in one-letter code: Trypsin-5 (246 aa).

A signal peptide spans 1-15 (MNSLLFLALVGAAVA). A propeptide spans 16-23 (FPVDDDDK) (activation peptide). Residues 24–244 (IVGGYTCREN…YVDWIQDTIA (221 aa)) form the Peptidase S1 domain. Cysteine 48 and cysteine 64 are joined by a disulfide. Residues histidine 63 and aspartate 107 each act as charge relay system in the active site. Intrachain disulfides connect cysteine 139–cysteine 206, cysteine 171–cysteine 185, and cysteine 196–cysteine 220. The active-site Charge relay system is serine 200.

The protein belongs to the peptidase S1 family. Post-translationally, proteolytically cleaved and activated by an autocatalytic mechanism. Cleavage by CTRC inhibits autoactivation. In terms of tissue distribution, expressed in the heart, lung, brain, kidney, liver, epididymis, ovary and uterus. Expression in the testis is limited to round and elongating spermatids.

It localises to the cytoplasmic vesicle. It is found in the secretory vesicle. The protein resides in the acrosome. It carries out the reaction Preferential cleavage: Arg-|-Xaa, Lys-|-Xaa.. With respect to regulation, activated by autocatalytic cleavage. Cleavage by CTRC inhibits autoactivation. Its function is as follows. Serine protease capable of autoactivation. The sequence is that of Trypsin-5 from Mus musculus (Mouse).